The sequence spans 352 residues: C-C chemokine receptor type 5 (352 aa).

Over 1-30 the chain is Extracellular; sequence MDYQVSSPIYDIDYYTSEPCQKINVKQIAA. The residue at position 3 (Y3) is a Sulfotyrosine. O-linked (GalNAc...) serine glycosylation is found at S6 and S7. Residues Y10, Y14, and Y15 each carry the sulfotyrosine modification. Intrachain disulfides connect C20-C269 and C101-C178. A helical transmembrane segment spans residues 31–58; sequence RLLPPLYSLVFIFGFVGNMLVILILINC. The Cytoplasmic segment spans residues 59 to 68; the sequence is KRLKSMTDIY. Residues 69-89 form a helical membrane-spanning segment; it reads LLNLAISDLFFLLTVPFWAHY. Residues 90–102 are Extracellular-facing; the sequence is AAAQWDFGNTMCQ. Residues 103 to 124 form a helical membrane-spanning segment; sequence LLTGLYFIGFFSGIFFIILLTI. Residues 125 to 141 are Cytoplasmic-facing; sequence DRYLAIVHAVFALKART. A helical membrane pass occupies residues 142–166; it reads VTFGVVTSVITWVVAVFASLPGIIF. At 167–198 the chain is on the extracellular side; the sequence is TRSQKEGLHYTCSSHFPYSQYQFWKNFQTLKI. Residues 199 to 218 traverse the membrane as a helical segment; it reads VILGLVLPLLVMVICYSGIL. Topologically, residues 219–235 are cytoplasmic; it reads KTLLRCRNEKKRHRAVR. A helical membrane pass occupies residues 236-260; that stretch reads LIFTIMIVYFLFWAPYNIVLLLNTF. Over 261–277 the chain is Extracellular; it reads QEFFGLNNCSSSNRLDQ. Residues 278–301 traverse the membrane as a helical segment; sequence AMQVTETLGMTHCCINPIIYAFVG. Over 302 to 352 the chain is Cytoplasmic; it reads EKFRNYLLVFFQKHIAKRFCKCCSIFQQEAPERASSVYTRSTGEQEISVGL. S-palmitoyl cysteine attachment occurs at residues C321, C323, and C324. 4 positions are modified to phosphoserine; by BARK1: S336, S337, S342, and S349.

It belongs to the G-protein coupled receptor 1 family. In terms of assembly, interacts with PRAF2. Efficient ligand binding to CCL3/MIP-1alpha and CCL4/MIP-1beta requires sulfation, O-glycosylation and sialic acid modifications. Glycosylation on Ser-6 is required for efficient binding of CCL4. Interacts with GRK2. Interacts with ARRB1 and ARRB2. Interacts with CNIH4. Interacts with S100A4; this interaction stimulates T-lymphocyte chemotaxis. Sulfated on at least 2 of the N-terminal tyrosines. Sulfation is required for efficient binding of the chemokines, CCL3 and CCL4. In terms of processing, palmitoylation in the C-terminal is important for cell surface expression. Post-translationally, phosphorylation on serine residues in the C-terminal is stimulated by binding CC chemokines especially by APO-RANTES. O-glycosylated, but not N-glycosylated. Ser-6 appears to be the major site even if Ser-7 may be also O-glycosylated. Also sialylated glycans present which contribute to chemokine binding. Thr-16 and Ser-17 may also be glycosylated and, if so, with small moieties such as a T-antigen.

It is found in the cell membrane. In terms of biological role, receptor for a number of inflammatory CC-chemokines including CCL3/MIP-1-alpha, CCL4/MIP-1-beta and RANTES and subsequently transduces a signal by increasing the intracellular calcium ion level. May play a role in the control of granulocytic lineage proliferation or differentiation. Participates in T-lymphocyte migration to the infection site by acting as a chemotactic receptor. The sequence is that of C-C chemokine receptor type 5 (CCR5) from Pan paniscus (Pygmy chimpanzee).